Consider the following 200-residue polypeptide: NAD(P)H dehydrogenase (quinone) (200 aa).

Residues 4–191 enclose the Flavodoxin-like domain; it reads VLVLYYSSYG…DIARYQGKRV (188 aa). Residues 10–15 and 79–81 contribute to the FMN site; these read SSYGHV and TRF. Position 12 (Y12) interacts with NAD(+). A substrate-binding site is contributed by W99. Residues 114–120 and H135 contribute to the FMN site; that span reads STGTQHG.

It belongs to the WrbA family. FMN is required as a cofactor.

It catalyses the reaction a quinone + NADH + H(+) = a quinol + NAD(+). It carries out the reaction a quinone + NADPH + H(+) = a quinol + NADP(+). In Burkholderia lata (strain ATCC 17760 / DSM 23089 / LMG 22485 / NCIMB 9086 / R18194 / 383), this protein is NAD(P)H dehydrogenase (quinone).